The chain runs to 512 residues: tRNA-guanine(15) transglycosylase (512 aa).

Residue Asp-85 is the Nucleophile of the active site. Asp-120 lines the substrate pocket. Residues Cys-272, Cys-274, and Cys-277 each coordinate Zn(2+).

This sequence belongs to the archaeosine tRNA-ribosyltransferase family. Zn(2+) serves as cofactor.

The enzyme catalyses guanosine(15) in tRNA + 7-cyano-7-deazaguanine = 7-cyano-7-carbaguanosine(15) in tRNA + guanine. It participates in tRNA modification; archaeosine-tRNA biosynthesis. Its function is as follows. Exchanges the guanine residue with 7-cyano-7-deazaguanine (preQ0) at position 15 in the dihydrouridine loop (D-loop) of archaeal tRNAs. The polypeptide is tRNA-guanine(15) transglycosylase (Aeropyrum pernix (strain ATCC 700893 / DSM 11879 / JCM 9820 / NBRC 100138 / K1)).